Here is a 389-residue protein sequence, read N- to C-terminus: Succinyl-diaminopimelate desuccinylase (389 aa).

Residue H72 coordinates Zn(2+). D74 is an active-site residue. D105 contributes to the Zn(2+) binding site. The Proton acceptor role is filled by E144. Zn(2+) is bound by residues E145, E173, and H362.

Belongs to the peptidase M20A family. DapE subfamily. Homodimer. Zn(2+) serves as cofactor. It depends on Co(2+) as a cofactor.

It catalyses the reaction N-succinyl-(2S,6S)-2,6-diaminopimelate + H2O = (2S,6S)-2,6-diaminopimelate + succinate. The protein operates within amino-acid biosynthesis; L-lysine biosynthesis via DAP pathway; LL-2,6-diaminopimelate from (S)-tetrahydrodipicolinate (succinylase route): step 3/3. Catalyzes the hydrolysis of N-succinyl-L,L-diaminopimelic acid (SDAP), forming succinate and LL-2,6-diaminopimelate (DAP), an intermediate involved in the bacterial biosynthesis of lysine and meso-diaminopimelic acid, an essential component of bacterial cell walls. The protein is Succinyl-diaminopimelate desuccinylase of Nitrobacter hamburgensis (strain DSM 10229 / NCIMB 13809 / X14).